A 247-amino-acid polypeptide reads, in one-letter code: Small ribosomal subunit protein uS3 (247 aa).

The KH type-2 domain occupies 39-109 (IRSMIRSFPE…KVQIKVKEIK (71 aa)). The disordered stretch occupies residues 224-247 (RSRRESGQKSDELVRDERTHAERG). Positions 227–247 (RESGQKSDELVRDERTHAERG) are enriched in basic and acidic residues.

This sequence belongs to the universal ribosomal protein uS3 family. As to quaternary structure, part of the 30S ribosomal subunit. Forms a tight complex with proteins S10 and S14.

Its function is as follows. Binds the lower part of the 30S subunit head. Binds mRNA in the 70S ribosome, positioning it for translation. The polypeptide is Small ribosomal subunit protein uS3 (Treponema pallidum (strain Nichols)).